We begin with the raw amino-acid sequence, 300 residues long: C-4 methylsterol oxidase erg25 (300 aa).

The Fatty acid hydroxylase domain occupies Thr140 to Thr276. Residues His154–His158 carry the Histidine box-1 motif. A Histidine box-2 motif is present at residues His167–His171. A helical membrane pass occupies residues Pro186–Phe206. The Histidine box-3 signature appears at His251–Met257.

This sequence belongs to the sterol desaturase family. As to quaternary structure, heterotetramer of erg25, erg26, erg27 and erg28. Erg28 acts as a scaffold to tether erg27 and other 4,4-demethylation-related enzymes, forming a demethylation enzyme complex, in the endoplasmic reticulum. The cofactor is Fe cation.

It localises to the endoplasmic reticulum membrane. The enzyme catalyses 4,4-dimethyl-5alpha-cholesta-8,24-dien-3beta-ol + 6 Fe(II)-[cytochrome b5] + 3 O2 + 5 H(+) = 4beta-methylzymosterol-4alpha-carboxylate + 6 Fe(III)-[cytochrome b5] + 4 H2O. It carries out the reaction 4alpha-methylzymosterol + 6 Fe(II)-[cytochrome b5] + 3 O2 + 5 H(+) = 4alpha-carboxyzymosterol + 6 Fe(III)-[cytochrome b5] + 4 H2O. The protein operates within steroid biosynthesis; zymosterol biosynthesis; zymosterol from lanosterol: step 3/6. Its pathway is steroid metabolism; ergosterol biosynthesis. Its function is as follows. C-4 methylsterol oxidase; part of the third module of ergosterol biosynthesis pathway that includes by the late steps of the pathway. Erg25 is a catalytic component of the C-4 demethylation complex that catalyzes the three-step monooxygenation required for the demethylation of 4,4-dimethyl and 4alpha-methylsterols. The third module or late pathway involves the ergosterol synthesis itself through consecutive reactions that mainly occur in the endoplasmic reticulum (ER) membrane. Firstly, the squalene synthase erg9 catalyzes the condensation of 2 farnesyl pyrophosphate moieties to form squalene, which is the precursor of all steroids. Secondly, squalene is converted into lanosterol by the consecutive action of the squalene epoxidase erg1 and the lanosterol synthase erg7. The lanosterol 14-alpha-demethylase erg11/cyp1 catalyzes C14-demethylation of lanosterol to produce 4,4'-dimethyl cholesta-8,14,24-triene-3-beta-ol. In the next steps, a complex process involving various demethylation, reduction and desaturation reactions catalyzed by the C-14 reductase erg24 and the C-4 demethylation complex erg25-erg26-erg27 leads to the production of zymosterol. Erg28 likely functions in the C-4 demethylation complex reaction by tethering erg26 and Erg27 to the endoplasmic reticulum or to facilitate interaction between these proteins. Then, the sterol 24-C-methyltransferase erg6 catalyzes the methyl transfer from S-adenosyl-methionine to the C-24 of zymosterol to form fecosterol. The C-8 sterol isomerase erg2 catalyzes the reaction which results in unsaturation at C-7 in the B ring of sterols and thus converts fecosterol to episterol. The sterol-C5-desaturases erg31 and erg32 then catalyze the introduction of a C-5 double bond in the B ring to produce 5-dehydroepisterol. The C-22 sterol desaturase erg5 further converts 5-dehydroepisterol into ergosta-5,7,22,24(28)-tetraen-3beta-ol by forming the C-22(23) double bond in the sterol side chain. Finally, ergosta-5,7,22,24(28)-tetraen-3beta-ol is substrate of the C-24(28) sterol reductase erg4 to produce ergosterol. In the genus Schizosaccharomyces, a second route exists between lanosterol and fecosterol, via the methylation of lanosterol to eburicol by erg6, followed by C14-demethylation by erg11/cyp1 and C4-demethylation by the demethylation complex erg25-erg26-erg27. The protein is C-4 methylsterol oxidase erg25 of Schizosaccharomyces pombe (strain 972 / ATCC 24843) (Fission yeast).